A 412-amino-acid chain; its full sequence is MAFYASKAMRAAALAAAVALALSSCGKGGDAAQGGQPAGREAPAPVVGVVTVHPQTVALTVELPGRLESLRTADVRAQVGGIIQKRLFQEGSYVRAGQPLYQIDSSTYEAGLESARAQLATAQATLAKADADLARYKPLVSADAISKQEYDAAVTAKRSAEASVKAAQAAIKSAGINLNRSRITAPISGFIGQSKVSEGTLLNAGDTTVLATIRQTNPMYVNVTQSASEVMKLRRQIAEGKLLAADGAIAVGIKFDDGTVYPEKGRLLFADPTVDESTGQITLRAAVSNDQNILMPGLYVRVLMDQVAADNAFIVPQQAVTRGAKDTVMIVNAQGGMEPREVTVAQQQGTNWIVTSGLKDGDKVVVEGISIAGMTGAKKVTPKEWAPSENQAAAPQAGVQTASEAKPASEAK.

A signal peptide spans 1–24 (MAFYASKAMRAAALAAAVALALSS). Cysteine 25 carries the N-palmitoyl cysteine lipid modification. Cysteine 25 is lipidated: S-diacylglycerol cysteine. A disordered region spans residues 377–412 (AKKVTPKEWAPSENQAAAPQAGVQTASEAKPASEAK). The span at 388–403 (SENQAAAPQAGVQTAS) shows a compositional bias: polar residues.

Belongs to the membrane fusion protein (MFP) (TC 8.A.1) family.

The protein resides in the cell inner membrane. Cell membrane lipoprotein, involved in cell membrane permeability to hydrophobic compounds such as antibiotics, dyes and detergents. This is Membrane fusion protein MtrC (mtrC) from Neisseria gonorrhoeae.